A 162-amino-acid polypeptide reads, in one-letter code: 2-amino-4-hydroxy-6-hydroxymethyldihydropteridine pyrophosphokinase (162 aa).

This sequence belongs to the HPPK family.

It carries out the reaction 6-hydroxymethyl-7,8-dihydropterin + ATP = (7,8-dihydropterin-6-yl)methyl diphosphate + AMP + H(+). It participates in cofactor biosynthesis; tetrahydrofolate biosynthesis; 2-amino-4-hydroxy-6-hydroxymethyl-7,8-dihydropteridine diphosphate from 7,8-dihydroneopterin triphosphate: step 4/4. Its function is as follows. Catalyzes the transfer of pyrophosphate from adenosine triphosphate (ATP) to 6-hydroxymethyl-7,8-dihydropterin, an enzymatic step in folate biosynthesis pathway. The sequence is that of 2-amino-4-hydroxy-6-hydroxymethyldihydropteridine pyrophosphokinase (folK) from Streptococcus pyogenes serotype M3 (strain ATCC BAA-595 / MGAS315).